The primary structure comprises 414 residues: Phthiocerol/phthiodiolone dimycocerosyl transferase (414 aa).

His-118 functions as the Proton acceptor in the catalytic mechanism.

This sequence belongs to the acyltransferase PapA5 family. As to quaternary structure, monomer. Interacts directly with the acyl carrier protein (ACP) domain of the mycocerosic acid synthase (mas) protein.

It catalyses the reaction 2 a mycocerosyl-[mycocerosic acid synthase] + a phthiocerol = a dimycocerosyl phthiocerol + 2 holo-[mycocerosic acid synthase].. The enzyme catalyses 2 a mycocerosyl-[mycocerosic acid synthase] + a phthiodiolone = a dimycocerosyl phthiodiolone + 2 holo-[mycocerosic acid synthase].. The catalysed reaction is 2 a mycocerosyl-[mycocerosic acid synthase] + a phenolphthiocerol = a dimycocerosyl phenolphthiocerol + 2 holo-[mycocerosic acid synthase].. Functionally, catalyzes diesterification of phthiocerol, phthiodiolone, and phenolphthiocerol with mycocerosic acids, the final step in the phthiocerol, phthiodiolone and phenolphthiocerol dimycocerosate esters (PDIM) synthesis. Can directly transfer the mycocerosate bound to the mycocerosic acid synthase (mas) onto the substrate alcohols. The protein is Phthiocerol/phthiodiolone dimycocerosyl transferase (papA5) of Mycobacterium ulcerans (strain Agy99).